We begin with the raw amino-acid sequence, 46 residues long: MTKRTLQGSKRKKIRVSGFRARMKTPCGRSILNSRRRKGRKKIMVS.

It belongs to the bacterial ribosomal protein bL34 family.

The protein resides in the plastid. Its subcellular location is the chloroplast. This Pyropia yezoensis (Susabi-nori) protein is Large ribosomal subunit protein bL34c.